Consider the following 510-residue polypeptide: ATP synthase subunit alpha (510 aa).

169–176 (GDRQTGKT) serves as a coordination point for ATP.

This sequence belongs to the ATPase alpha/beta chains family. In terms of assembly, F-type ATPases have 2 components, CF(1) - the catalytic core - and CF(0) - the membrane proton channel. CF(1) has five subunits: alpha(3), beta(3), gamma(1), delta(1), epsilon(1). CF(0) has three main subunits: a(1), b(2) and c(9-12). The alpha and beta chains form an alternating ring which encloses part of the gamma chain. CF(1) is attached to CF(0) by a central stalk formed by the gamma and epsilon chains, while a peripheral stalk is formed by the delta and b chains.

Its subcellular location is the cell inner membrane. It carries out the reaction ATP + H2O + 4 H(+)(in) = ADP + phosphate + 5 H(+)(out). Produces ATP from ADP in the presence of a proton gradient across the membrane. The alpha chain is a regulatory subunit. The sequence is that of ATP synthase subunit alpha from Anaeromyxobacter dehalogenans (strain 2CP-C).